The primary structure comprises 243 residues: PF03932 family protein CutC (243 aa).

It belongs to the CutC family.

It is found in the cytoplasm. The protein is PF03932 family protein CutC of Parabacteroides distasonis (strain ATCC 8503 / DSM 20701 / CIP 104284 / JCM 5825 / NCTC 11152).